We begin with the raw amino-acid sequence, 973 residues long: Sodium/calcium exchanger 1 (973 aa).

Positions 1–35 (MYNMRRLSLSPTFSMGFHLLVTVSLLFSHVDHVIA) are cleaved as a signal peptide. Residues 36 to 74 (ETEMEGEGNETGECTGSYYCKKGVILPIWEPQDPSFGDK) are Extracellular-facing. N-linked (GlcNAc...) asparagine glycosylation occurs at N44. A helical membrane pass occupies residues 75–95 (IARATVYFVAMVYMFLGVSII). Over 96-136 (ADRFMSSIEVITSQEKEITIKKPNGETTKTTVRIWNETVSN) the chain is Cytoplasmic. The chain crosses the membrane as a helical span at residues 137–157 (LTLMALGSSAPEILLSVIEVC). The stretch at 141-181 (ALGSSAPEILLSVIEVCGHNFTAGDLGPSTIVGSAAFNMFI) is one Alpha-1 repeat. The Extracellular segment spans residues 158–170 (GHNFTAGDLGPST). N160 carries an N-linked (GlcNAc...) asparagine glycan. A helical membrane pass occupies residues 171–191 (IVGSAAFNMFIIIALCVYVVP). Over 192-204 (DGETRKIKHLRVF) the chain is Cytoplasmic. Residues 205–225 (FVTAAWSIFAYTWLYIILSVI) traverse the membrane as a helical segment. At 226-231 (SPGVVE) the chain is on the extracellular side. Residues 232–252 (VWEGLLTFFFFPICVVFAWVA) form a helical membrane-spanning segment. The Cytoplasmic segment spans residues 253-800 (DRRLLFYKYV…FVPPTEYWNG (548 aa)). The putative calmodulin-binding region stretch occupies residues 254–273 (RRLLFYKYVYKRYRAGKQRG). S285 and S392 each carry phosphoserine. 2 consecutive Calx-beta domains span residues 396–496 (VNTE…VHLS) and 527–627 (ATVT…LEIG). Positions 420, 456, 481, 482, 484, 486, 489, 533, 534, 535, 551, 587, 613, 614, 615, and 718 each coordinate Ca(2+). Residues 801–821 (WACFIVSILMIGLLTAFIGDL) form a helical membrane-spanning segment. Over 822 to 824 (ASH) the chain is Extracellular. Residues 825 to 845 (FGCTIGLKDSVTAVVFVALGT) form a helical membrane-spanning segment. One copy of the Alpha-2 repeat lies at 842–878 (ALGTSVPDTFASKVAATQDQYADASIGNVTGSNAVNV). Topologically, residues 846 to 874 (SVPDTFASKVAATQDQYADASIGNVTGSN) are cytoplasmic. The helical transmembrane segment at 875-895 (AVNVFLGIGVAWSIAAIYHAA) threads the bilayer. Residues 896–906 (NGEQFKVSPGT) are Extracellular-facing. A helical membrane pass occupies residues 907–927 (LAFSVTLFTIFAFINVGVLLY). Residues 928 to 944 (RRRPEIGGELGGPRTAK) lie on the Cytoplasmic side of the membrane. The chain crosses the membrane as a helical span at residues 945 to 965 (LLTSCLFVLLWLLYIFFSSLE). Over 966–973 (AYCHIKGF) the chain is Extracellular.

This sequence belongs to the Ca(2+):cation antiporter (CaCA) (TC 2.A.19) family. SLC8 subfamily. Detected primarily in heart and at lower levels in brain. Expressed in cardiac sarcolemma, brain, kidney, liver, pancreas, skeletal muscle, placenta and lung.

The protein localises to the cell membrane. It carries out the reaction Ca(2+)(in) + 3 Na(+)(out) = Ca(2+)(out) + 3 Na(+)(in). With respect to regulation, activated by micromolar levels of Ca(2+). Functionally, mediates the exchange of one Ca(2+) ion against three to four Na(+) ions across the cell membrane, and thereby contributes to the regulation of cytoplasmic Ca(2+) levels and Ca(2+)-dependent cellular processes. Contributes to Ca(2+) transport during excitation-contraction coupling in muscle. In a first phase, voltage-gated channels mediate the rapid increase of cytoplasmic Ca(2+) levels due to release of Ca(2+) stores from the endoplasmic reticulum. SLC8A1 mediates the export of Ca(2+) from the cell during the next phase, so that cytoplasmic Ca(2+) levels rapidly return to baseline. Required for normal embryonic heart development and the onset of heart contractions. The chain is Sodium/calcium exchanger 1 (SLC8A1) from Homo sapiens (Human).